The primary structure comprises 183 residues: Acireductone dioxygenase (183 aa).

Residues His99, His101, Glu105, and His144 each contribute to the Fe(2+) site. Residues His99, His101, Glu105, and His144 each coordinate Ni(2+).

Belongs to the acireductone dioxygenase (ARD) family. In terms of assembly, monomer. The cofactor is Fe(2+). Ni(2+) is required as a cofactor.

The enzyme catalyses 1,2-dihydroxy-5-(methylsulfanyl)pent-1-en-3-one + O2 = 3-(methylsulfanyl)propanoate + CO + formate + 2 H(+). It catalyses the reaction 1,2-dihydroxy-5-(methylsulfanyl)pent-1-en-3-one + O2 = 4-methylsulfanyl-2-oxobutanoate + formate + 2 H(+). It functions in the pathway amino-acid biosynthesis; L-methionine biosynthesis via salvage pathway; L-methionine from S-methyl-5-thio-alpha-D-ribose 1-phosphate: step 5/6. Functionally, catalyzes 2 different reactions between oxygen and the acireductone 1,2-dihydroxy-3-keto-5-methylthiopentene (DHK-MTPene) depending upon the metal bound in the active site. Fe-containing acireductone dioxygenase (Fe-ARD) produces formate and 2-keto-4-methylthiobutyrate (KMTB), the alpha-ketoacid precursor of methionine in the methionine recycle pathway. Ni-containing acireductone dioxygenase (Ni-ARD) produces methylthiopropionate, carbon monoxide and formate, and does not lie on the methionine recycle pathway. The polypeptide is Acireductone dioxygenase (Microcystis aeruginosa).